Consider the following 427-residue polypeptide: Transcription termination factor Rho (427 aa).

Residues 51–125 form the Rho RNA-BD domain; sequence LLFMEGVLEI…LHVEAVNGDD (75 aa). ATP-binding positions include 168–173, 180–185, and Arg211; these read GFGQRG and KAGKTM.

The protein belongs to the Rho family. In terms of assembly, homohexamer. The homohexamer assembles into an open ring structure.

Functionally, facilitates transcription termination by a mechanism that involves Rho binding to the nascent RNA, activation of Rho's RNA-dependent ATPase activity, and release of the mRNA from the DNA template. The protein is Transcription termination factor Rho of Bacillus subtilis (strain 168).